We begin with the raw amino-acid sequence, 211 residues long: Ribosomal RNA large subunit methyltransferase E (211 aa).

Positions 60, 62, 80, 96, and 121 each coordinate S-adenosyl-L-methionine. K161 acts as the Proton acceptor in catalysis.

The protein belongs to the class I-like SAM-binding methyltransferase superfamily. RNA methyltransferase RlmE family.

The protein resides in the cytoplasm. It catalyses the reaction uridine(2552) in 23S rRNA + S-adenosyl-L-methionine = 2'-O-methyluridine(2552) in 23S rRNA + S-adenosyl-L-homocysteine + H(+). Its function is as follows. Specifically methylates the uridine in position 2552 of 23S rRNA at the 2'-O position of the ribose in the fully assembled 50S ribosomal subunit. The polypeptide is Ribosomal RNA large subunit methyltransferase E (Cellvibrio japonicus (strain Ueda107) (Pseudomonas fluorescens subsp. cellulosa)).